Here is a 276-residue protein sequence, read N- to C-terminus: 2,3,4,5-tetrahydropyridine-2,6-dicarboxylate N-succinyltransferase (276 aa).

Substrate contacts are provided by arginine 104 and aspartate 141.

Belongs to the transferase hexapeptide repeat family. Homotrimer.

The protein localises to the cytoplasm. It catalyses the reaction (S)-2,3,4,5-tetrahydrodipicolinate + succinyl-CoA + H2O = (S)-2-succinylamino-6-oxoheptanedioate + CoA. Its pathway is amino-acid biosynthesis; L-lysine biosynthesis via DAP pathway; LL-2,6-diaminopimelate from (S)-tetrahydrodipicolinate (succinylase route): step 1/3. In Legionella pneumophila (strain Corby), this protein is 2,3,4,5-tetrahydropyridine-2,6-dicarboxylate N-succinyltransferase.